Here is a 250-residue protein sequence, read N- to C-terminus: tRNA:m(4)X modification enzyme TRM13 (250 aa).

Positions 1 to 10 (MGRAPAKRKP) are enriched in basic residues. Positions 1 to 20 (MGRAPAKRKPSSPPPPPPPG) are disordered. Residues 11-20 (SSPPPPPPPG) show a composition bias toward pro residues. A CHHC U11-48K-type zinc finger spans residues 62 to 89 (LVPCPVDPSHTVLEENLEAHVGKCPLKK). Zn(2+) contacts are provided by Cys65, His71, His81, and Cys85.

This sequence belongs to the methyltransferase TRM13 family.

Its subcellular location is the nucleus. The protein resides in the cytoplasm. The enzyme catalyses cytidine(4) in tRNA(Pro) + S-adenosyl-L-methionine = 2'-O-methylcytidine(4) in tRNA(Pro) + S-adenosyl-L-homocysteine + H(+). It carries out the reaction cytidine(4) in tRNA(Gly)(GCC) + S-adenosyl-L-methionine = 2'-O-methylcytidine(4) in tRNA(Gly)(GCC) + S-adenosyl-L-homocysteine + H(+). It catalyses the reaction adenosine(4) in tRNA(His) + S-adenosyl-L-methionine = 2'-O-methyladenosine(4) in tRNA(His) + S-adenosyl-L-homocysteine + H(+). TRNA methylase that catalyzes 2'-O-methyladenosine (Am) nucleoside formation on tRNA(Gly)(GCC) in vitro. May 2'-O-methylate cytidine(4) in tRNA(Pro) and tRNA(Gly)(GCC), and adenosine(4) in tRNA(His). Involved in salt stress tolerance. The sequence is that of tRNA:m(4)X modification enzyme TRM13 from Oryza sativa subsp. japonica (Rice).